The sequence spans 536 residues: DEAD-box ATP-dependent RNA helicase 26 (536 aa).

The tract at residues 1-44 is disordered; that stretch reads MMSGGPSDATHRKRRRRRGPKGSGVDGPSIPRAVTTNGAGPEEE. The segment covering 11–20 has biased composition (basic residues); sequence HRKRRRRRGP. The short motif at 74–102 is the Q motif element; it reads TRFDQCPVSPLSLKAIKDAGYEKMTQVQE. In terms of domain architecture, Helicase ATP-binding spans 105-282; sequence LPIILQGEDV…HIAMKRGYKF (178 aa). ATP is bound at residue 118-125; the sequence is AKTGTGKT. Residues 230 to 233 carry the DEAD box motif; the sequence is DEAD. Residues 316-466 form the Helicase C-terminal domain; it reads VLKKHIAEDA…SIQTGVKDAL (151 aa).

Belongs to the DEAD box helicase family.

It carries out the reaction ATP + H2O = ADP + phosphate + H(+). The chain is DEAD-box ATP-dependent RNA helicase 26 from Oryza sativa subsp. japonica (Rice).